We begin with the raw amino-acid sequence, 301 residues long: uncharacterized protein (301 aa).

Residues Ser44 and Tyr107 each act as charge relay system in the active site. Tyr133 functions as the Proton donor in the catalytic mechanism. Residue Lys162 is the Schiff-base intermediate with substrate of the active site.

This sequence belongs to the DapA family. As to quaternary structure, homotetramer.

It is found in the cytoplasm. This is an uncharacterized protein from Pyrobaculum arsenaticum (strain DSM 13514 / JCM 11321 / PZ6).